A 1004-amino-acid polypeptide reads, in one-letter code: Protein phosphatase 1 regulatory subunit 12A (1004 aa).

The interval 35–38 (KVKF) is important for interaction with PPP1CB. ANK repeat units follow at residues 39–68 (DDGA…DINY), 72–101 (DGLT…NINQ), 105–134 (EGWI…HVGA), 138–164 (EGDT…RQGV), 198–227 (SGGT…DVNI), and 231–260 (DGWT…DMEA). Residues 291–300 (HSEKREKKSP) show a composition bias toward basic and acidic residues. The tract at residues 291–920 (HSEKREKKSP…SYLEDRKPYC (630 aa)) is disordered. The span at 302–316 (IESTANLDNNQTQKT) shows a compositional bias: polar residues. Basic and acidic residues-rich tracts occupy residues 318 to 329 (KNKETLIMEQEK) and 336 to 353 (SLEH…KDES). Residues 357 to 369 (SEEEEDDDSESEA) are compositionally biased toward acidic residues. A compositionally biased stretch (polar residues) spans 378–392 (ANANTTSTQSASMTA). A compositionally biased stretch (basic and acidic residues) spans 417-427 (SPKEEERKDES). Residues 464-475 (RSASSPRLSSSL) are compositionally biased toward low complexity. Residues 476–486 (DNKEKEKDGKG) are compositionally biased toward basic and acidic residues. The segment covering 514–525 (SSASSIRSGSSY) has biased composition (low complexity). The span at 528 to 538 (RKWEEDVKKNS) shows a compositional bias: basic and acidic residues. Residues 539 to 554 (LNEGPTSLNTSYQRSG) are compositionally biased toward polar residues. Low complexity-rich tracts occupy residues 564 to 578 (VSSN…VTSS) and 587 to 602 (ASAN…STSA). The span at 613 to 624 (WAEDSTEKEKDS) shows a compositional bias: basic and acidic residues. Over residues 625-659 (VPTAVTVPVAPSVVNAAATTTAMTTATSGTVSSTS) the composition is skewed to low complexity. The span at 672 to 681 (VRDEESESQR) shows a compositional bias: basic and acidic residues. A compositionally biased stretch (basic residues) spans 682 to 692 (KARSRQARQSR). At T695 the chain carries Phosphothreonine; by ROCK2. The span at 717-765 (RTREQENEEKEKEEKEKQDKEKQEEKKESETKDDDYRQRYSRTVEEPYH) shows a compositional bias: basic and acidic residues. Positions 770–793 (TSTSTSTSSTSSLSTSTSSLSSSS) are enriched in low complexity. Residues 794 to 808 (QLNRPNSLIGITSAY) show a composition bias toward polar residues. A compositionally biased stretch (basic and acidic residues) spans 812 to 837 (GTKESEREGGKKEEEKEEDKSQPKSI). Residues 838 to 849 (RERRRPREKRRS) show a composition bias toward basic residues. At T850 the chain carries Phosphothreonine; by ROCK2. Residues 864-880 (QEHQSDSEEGTNKKETQ) show a composition bias toward basic and acidic residues. Over residues 881–896 (SDSLSRYDTGSLSVSS) the composition is skewed to polar residues.

PP1 comprises a catalytic subunit, PPP1CA, PPP1CB or PPP1CC, and one or several targeting or regulatory subunits. PPP1R12A mediates binding to myosin. In terms of processing, phosphorylated by CIT (Rho-associated kinase) and by ROCK2 on serine and threonine residues. Phosphorylation at Thr-695 leads to inhibition of myosin phosphatase activity. Phosphorylation at Thr-850 abolishes myosin binding. May be phosphorylated at Thr-695 by DMPK; may inhibit the myosin phosphatase activity. In terms of tissue distribution, detected in brain, lung, aorta, heart, gizzard, stomach, oviduct, spleen, kidney and small intestine.

Its subcellular location is the cytoplasm. The protein localises to the cytoskeleton. It localises to the stress fiber. Regulates myosin phosphatase activity. The protein is Protein phosphatase 1 regulatory subunit 12A (PPP1R12A) of Gallus gallus (Chicken).